A 95-amino-acid chain; its full sequence is MKLNREDVLHIARLAKLGLEEDEINRLSKELSALLEHFEVLQQVDTTGVEPTAQSTPVKSVLKEDIIKPSYDREEILSNAPRREGDYVRIRAVME.

It belongs to the GatC family. In terms of assembly, heterotrimer of A, B and C subunits.

It catalyses the reaction L-glutamyl-tRNA(Gln) + L-glutamine + ATP + H2O = L-glutaminyl-tRNA(Gln) + L-glutamate + ADP + phosphate + H(+). The enzyme catalyses L-aspartyl-tRNA(Asn) + L-glutamine + ATP + H2O = L-asparaginyl-tRNA(Asn) + L-glutamate + ADP + phosphate + 2 H(+). Its function is as follows. Allows the formation of correctly charged Asn-tRNA(Asn) or Gln-tRNA(Gln) through the transamidation of misacylated Asp-tRNA(Asn) or Glu-tRNA(Gln) in organisms which lack either or both of asparaginyl-tRNA or glutaminyl-tRNA synthetases. The reaction takes place in the presence of glutamine and ATP through an activated phospho-Asp-tRNA(Asn) or phospho-Glu-tRNA(Gln). The chain is Aspartyl/glutamyl-tRNA(Asn/Gln) amidotransferase subunit C from Dehalococcoides mccartyi (strain ATCC BAA-2266 / KCTC 15142 / 195) (Dehalococcoides ethenogenes (strain 195)).